The primary structure comprises 91 residues: Non-specific lipid-transfer protein 1 (91 aa).

Intrachain disulfides connect Cys3–Cys50, Cys13–Cys27, Cys28–Cys73, and Cys48–Cys87. A 1,2-diacyl-sn-glycero-3-phosphocholine contacts are provided by Arg44 and Tyr79.

Monomer.

In terms of biological role, plant non-specific lipid-transfer proteins transfer phospholipids as well as galactolipids across membranes. May play a role in wax or cutin deposition in the cell walls of expanding epidermal cells and certain secretory tissues. Has antifungal activity against F.solani, F.oxysporum, P.aphanidermatum and S.rolfsii. Has antibacterial activity against the Gram-positive bacterium S.aureus but not against the Gram-negative bacterium S.typhimurium. The sequence is that of Non-specific lipid-transfer protein 1 from Vigna radiata var. radiata (Mung bean).